Reading from the N-terminus, the 43-residue chain is DRDSCVDKSKCAKYGYYGQCDECCKKAGDRAGNCVYLKCKCNQ.

4 disulfide bridges follow: Cys5-Cys23, Cys11-Cys34, Cys20-Cys39, and Cys24-Cys41.

This sequence belongs to the ergtoxin family. Gamma-KTx 4 subfamily. Expressed by the venom gland.

It is found in the secreted. Its function is as follows. Reversibly blocks Kv11/ERG potassium channels. This Centruroides limpidus (Mexican scorpion) protein is Potassium channel toxin gamma-KTx 4.7.